A 917-amino-acid polypeptide reads, in one-letter code: Hexokinase-1 (917 aa).

N-acetylmethionine is present on M1. Residues 1-10 (MIAAQLLAYY) are mitochondrial-binding peptide (MBP). 2 consecutive Hexokinase domains span residues 16–458 (DDQV…MVTA) and 464–906 (AEQH…LITA). Residues R30 and 84-89 (DLGGSS) contribute to the ATP site. The segment at 73–207 (DGSEKGDFIA…DYDANIVAVV (135 aa)) is hexokinase small subdomain 1. Residue 84–91 (DLGGSSFR) coordinates D-glucose 6-phosphate. D-glucose contacts are provided by residues S155, 172 to 173 (TK), and 208 to 209 (ND). The hexokinase large subdomain 1 stretch occupies residues 208–447 (NDTVGTMMTC…SDVRFLLSES (240 aa)). The D-glucose 6-phosphate site is built by D209 and T232. Residues N235, E260, and 291-294 (QLFE) contribute to the D-glucose site. S337 is subject to Phosphoserine. N345 contacts ATP. 413–415 (DGS) provides a ligand contact to D-glucose 6-phosphate. 425–426 (RR) is a binding site for ATP. Residues S449 and 532–536 (DLGGT) contribute to the D-glucose 6-phosphate site. Residues 521–655 (DGTENGDFLA…EFDLDVVAVV (135 aa)) are hexokinase small subdomain 2. ATP is bound at residue 532 to 537 (DLGGTN). D-glucose-binding positions include 603-604 (SF), 620-621 (TK), and 656-657 (ND). The interval 656–895 (NDTVGTMMTC…CNVSFLLSED (240 aa)) is hexokinase large subdomain 2. D-glucose 6-phosphate is bound by residues D657 and T680. An ATP-binding site is contributed by T680. D-glucose is bound by residues 682 to 683 (SN), E708, and E742. ATP-binding positions include 747 to 748 (GM), 784 to 788 (TKFLS), and 863 to 867 (TLYKL). D-glucose 6-phosphate-binding positions include 861 to 863 (DGT) and S897.

It belongs to the hexokinase family. Monomer. Interacts with RABL2/RABL2A; binds preferentially to GTP-bound RABL2. Interacts with VDAC1. The HK1-VDAC1 complex interacts with ATF2. Interacts (via N-terminal spermatogenic cell-specific region) with PFKM (via C-terminus). Interacts with SMAD5.

It is found in the mitochondrion outer membrane. Its subcellular location is the cytoplasm. The protein localises to the cytosol. It catalyses the reaction a D-hexose + ATP = a D-hexose 6-phosphate + ADP + H(+). It carries out the reaction D-fructose + ATP = D-fructose 6-phosphate + ADP + H(+). The enzyme catalyses D-glucose + ATP = D-glucose 6-phosphate + ADP + H(+). The catalysed reaction is D-mannose + ATP = D-mannose 6-phosphate + ADP + H(+). It catalyses the reaction D-glucosamine + ATP = D-glucosamine 6-phosphate + ADP + H(+). It functions in the pathway carbohydrate metabolism; hexose metabolism. It participates in carbohydrate degradation; glycolysis; D-glyceraldehyde 3-phosphate and glycerone phosphate from D-glucose: step 1/4. Hexokinase is an allosteric enzyme inhibited by its product D-glucose 6-phosphate. Hexokinase activity is inhibited by N-acetyl-D-glucosamine. In terms of biological role, catalyzes the phosphorylation of various hexoses, such as D-glucose, D-glucosamine, D-fructose, D-mannose and 2-deoxy-D-glucose, to hexose 6-phosphate (D-glucose 6-phosphate, D-glucosamine 6-phosphate, D-fructose 6-phosphate, D-mannose 6-phosphate and 2-deoxy-D-glucose 6-phosphate, respectively). Does not phosphorylate N-acetyl-D-glucosamine. Mediates the initial step of glycolysis by catalyzing phosphorylation of D-glucose to D-glucose 6-phosphate. Involved in innate immunity and inflammation by acting as a pattern recognition receptor for bacterial peptidoglycan. When released in the cytosol, N-acetyl-D-glucosamine component of bacterial peptidoglycan inhibits the hexokinase activity of HK1 and causes its dissociation from mitochondrial outer membrane, thereby activating the NLRP3 inflammasome. This is Hexokinase-1 from Pongo abelii (Sumatran orangutan).